The following is a 403-amino-acid chain: Calcium-responsive transactivator (403 aa).

The interval 1-148 (MSVAFASARP…TLPTTTMSMA (148 aa)) is N-terminal auto-inhibitory domain. An SH2-binding motif is present at residues 50-53 (YQQI). Disordered regions lie at residues 72 to 111 (QSLLPAPPTQNMNLGPGGMSQTGPSQTLHSQGNLSEALGS), 152 to 171 (HGSAPGYSHTVPSSQNVPMQ), 224 to 303 (NQSS…RTFE), and 318 to 403 (SQQQ…NYQQ). 2 stretches are compositionally biased toward polar residues: residues 92–105 (QTGPSQTLHSQGNL) and 161–171 (TVPSSQNVPMQ). Residues 149 to 238 (VSTHGSAPGY…GSSMMGQRPL (90 aa)) are methionine-rich intra-molecular domain. Residues 224–235 (NQSSQGSSMMGQ) show a composition bias toward low complexity. The segment at 252 to 324 (YLGQEEYYSE…AQYSQQQTGY (73 aa)) is MFD domain. Positions 263–277 (YGHSQGSSEAMTPQY) are enriched in polar residues. Over residues 286-296 (YSYQQSSYGEQ) the composition is skewed to low complexity. The tract at residues 341-403 (NQQNYPGQQQ…EQGQYGNYQQ (63 aa)) is necessary for nuclear localization. Positions 360-363 (SQYS) match the SH2-binding motif. Residues 378–386 (TSQTTSTAQ) carry the SH3-binding motif. Residues 398 to 401 (YGNY) carry the SH2-binding motif.

The protein belongs to the SS18 family. In terms of assembly, homodimer.

Its subcellular location is the nucleus. Its function is as follows. Transcriptional activator which may be required for calcium-dependent dendritic growth and branching in cortical neurons. The sequence is that of Calcium-responsive transactivator (ss18l1) from Xenopus laevis (African clawed frog).